The following is a 190-amino-acid chain: Dynein axonemal light chain 1 (190 aa).

4 LRR repeats span residues 49 to 70 (VCEKLSLSTNCIEKIANLNGLK), 71 to 92 (NLKILSLGRNNIKNLNGLEAVG), 94 to 115 (SLEELWISYNSIEKLKGIHVLK), and 116 to 137 (KLKVLLMSNNQVKDWGEFNKLQ). Positions 150–190 (NPLEEKHSAEGDWQDRVTKSLKALKKLDGTPIIKNDEEEED) constitute an LRRCT domain.

This sequence belongs to the dynein light chain LC1-type family. As to quaternary structure, interacts with DNAH5, a outer arm dynein heavy chain. Interacts with tubulin located within the A-tubule of the outer doublets in a ATP-independent manner.

It is found in the cytoplasm. The protein resides in the cytoskeleton. The protein localises to the cilium axoneme. In terms of biological role, part of the multisubunit axonemal ATPase complexes that generate the force for cilia motility and govern beat frequency. Component of the outer arm dynein (ODA). May be involved in a mechanosensory feedback mechanism controlling ODA activity based on external conformational cues by tethering the outer arm dynein heavy chain (DNAH5) to the microtubule within the axoneme. The chain is Dynein axonemal light chain 1 (DNAL1) from Ciona intestinalis (Transparent sea squirt).